Here is a 280-residue protein sequence, read N- to C-terminus: Thioredoxin-related transmembrane protein 1 (280 aa).

The first 26 residues, 1–26 (MAPSGSLAVPLAVLVLLLWGAPWTHG), serve as a signal peptide directing secretion. Residues 27–132 (RRSNVRVITD…FINFISDKEW (106 aa)) form the Thioredoxin domain. The Extracellular segment spans residues 27-180 (RRSNVRVITD…EDLGLPVWGS (154 aa)). Residues Cys56 and Cys59 each act as nucleophile in the active site. A disulfide bond links Cys56 and Cys59. A helical membrane pass occupies residues 181-203 (YTVFALATLFSGLLLGLCMIFVA). The Cytoplasmic portion of the chain corresponds to 204–280 (DCLCPSKRRR…LGPSLATDKS (77 aa)). 2 S-palmitoyl cysteine lipidation sites follow: Cys205 and Cys207. The segment at 218 to 280 (PYPSKKLLSE…LGPSLATDKS (63 aa)) is disordered. Phosphoserine occurs at positions 228, 247, 270, 274, and 280. Positions 237–252 (EEQEADEEDVSEEEAE) are enriched in acidic residues.

In terms of assembly, interacts with ATP2A2. Post-translationally, palmitoylated; palmitoylation is required for localization to mitochondria-associated endoplasmic reticulum membrane (MAM). In terms of tissue distribution, ubiquitous. Highly expressed in kidney, liver, placenta and lung.

The protein localises to the endoplasmic reticulum membrane. Its subcellular location is the mitochondrion membrane. It is found in the secreted. The catalysed reaction is Catalyzes the rearrangement of -S-S- bonds in proteins.. Thiredoxin domain-containing protein that participates in various redox reactions through the reversible oxidation of its active center dithiol to a disulfide and catalyze dithiol-disulfide exchange reactions. Acts as a key inhibitor of the alternative triglyceride biosynthesis pathway by inhibiting the activity of TMEM68/DIESL at the endoplasmic reticulum, thereby restricting accumulation of triacylglycerol. The alternative triglyceride biosynthesis pathway mediates formation of triacylglycerol from diacylglycerol and membrane phospholipids. Acts as a protein disulfide isomerase by catalyzing formation or reduction of disulfide bonds. Specifically mediates formation of disulfide bonds of transmembrane proteins at the endoplasmic reticulum membrane. Involved in endoplasmic reticulum-associated degradation (ERAD) via its protein disulfide isomerase activity by acting on folding-defective polypeptides at the endoplasmic reticulum membrane. Acts as a negative regulator of platelet aggregation following secretion in the extracellular space. Acts as a regulator of endoplasmic reticulum-mitochondria contact sites via its ability to regulate redox signals. Regulates endoplasmic reticulum-mitochondria Ca(2+) flux. The protein is Thioredoxin-related transmembrane protein 1 of Homo sapiens (Human).